The primary structure comprises 208 residues: Proheparin-binding EGF-like growth factor (208 aa).

The N-terminal stretch at 1–23 (MKLLPSVVLKLFLAAVLSALVTG) is a signal peptide. The propeptide occupies 24 to 62 (ESLERLRRGLAAATSNPDPPTGTTNQLLPTGADRAQEVQ). Topologically, residues 24–160 (ESLERLRRGL…ENPLYTYDHT (137 aa)) are extracellular. The tract at residues 82 to 103 (ALATPGKEKNGKKKRKGKGLGK) is disordered. An O-linked (GalNAc...) threonine glycan is attached at Thr-85. The segment covering 91–102 (NGKKKRKGKGLG) has biased composition (basic residues). The 41-residue stretch at 104–144 (KRDPCLKKYKDYCIHGECRYLKELRIPSCHCLPGYHGQRCH) folds into the EGF-like domain. 3 disulfide bridges follow: Cys-108/Cys-121, Cys-116/Cys-132, and Cys-134/Cys-143. Positions 149–208 (PVENPLYTYDHTTVLAVVAVVLSSVCLLVIVGLLMFRYHRRGGYDLESEEKVKLGMASSH) are cleaved as a propeptide — C-terminal. The chain crosses the membrane as a helical span at residues 161-184 (TVLAVVAVVLSSVCLLVIVGLLMF). Residues 185–208 (RYHRRGGYDLESEEKVKLGMASSH) lie on the Cytoplasmic side of the membrane.

In terms of assembly, interacts with FBLN1. Interacts with EGFR and ERBB4. Post-translationally, O-glycosylated. In terms of tissue distribution, most abundant in skeletal muscle, lung, spleen brain and heart.

It localises to the secreted. The protein localises to the extracellular space. Its subcellular location is the cell membrane. Its function is as follows. Growth factor that mediates its effects via EGFR, ERBB2 and ERBB4. Required for normal cardiac valve formation and normal heart function. Promotes smooth muscle cell proliferation. May be involved in macrophage-mediated cellular proliferation. It is mitogenic for fibroblasts, but not endothelial cells. It is able to bind EGF receptor/EGFR with higher affinity than EGF itself and is a far more potent mitogen for smooth muscle cells than EGF. Also acts as a diphtheria toxin receptor. This is Proheparin-binding EGF-like growth factor (Hbegf) from Rattus norvegicus (Rat).